A 126-amino-acid polypeptide reads, in one-letter code: Histone H2B type F-S (126 aa).

Residues 1-12 (MPEPAKSAPAPK) show a composition bias toward low complexity. Residues 1–36 (MPEPAKSAPAPKKGSKKAVTKAQKKDGRKRKRSRKE) are disordered. Pro-2 bears the N-acetylproline mark. Position 3 is an ADP-ribosyl glutamic acid (Glu-3). At Lys-6 the chain carries N6-(2-hydroxyisobutyryl)lysine; alternate. Residue Lys-6 is modified to N6-(beta-hydroxybutyryl)lysine; alternate. Residue Lys-6 is modified to N6-acetyllysine; alternate. An N6-butyryllysine; alternate modification is found at Lys-6. An N6-crotonyllysine; alternate modification is found at Lys-6. The residue at position 6 (Lys-6) is an N6-lactoyllysine; alternate. A Glycyl lysine isopeptide (Lys-Gly) (interchain with G-Cter in SUMO2); alternate cross-link involves residue Lys-6. At Ser-7 the chain carries ADP-ribosylserine. Lys-12 is modified (N6-(beta-hydroxybutyryl)lysine; alternate). An N6-acetyllysine; alternate mark is found at Lys-12 and Lys-13. 2 positions are modified to N6-crotonyllysine; alternate: Lys-12 and Lys-13. N6-lactoyllysine; alternate is present on Lys-12. At Lys-13 the chain carries N6-(2-hydroxyisobutyryl)lysine; alternate. At Ser-15 the chain carries Phosphoserine; by STK4/MST1. N6-acetyllysine; alternate is present on residues Lys-16, Lys-17, Lys-21, and Lys-24. Residues Lys-16, Lys-17, Lys-21, and Lys-24 each carry the N6-crotonyllysine; alternate modification. 4 positions are modified to N6-lactoyllysine; alternate: Lys-16, Lys-17, Lys-21, and Lys-24. N6-(beta-hydroxybutyryl)lysine; alternate occurs at positions 17 and 21. Lys-17 is modified (N6-glutaryllysine; alternate). N6-(2-hydroxyisobutyryl)lysine; alternate occurs at positions 21 and 24. Residue Lys-21 is modified to N6-butyryllysine; alternate. A Glycyl lysine isopeptide (Lys-Gly) (interchain with G-Cter in SUMO2); alternate cross-link involves residue Lys-21. Position 25 is an N6-(2-hydroxyisobutyryl)lysine (Lys-25). N6-(2-hydroxyisobutyryl)lysine; alternate is present on Lys-35. Lys-35 bears the N6-(beta-hydroxybutyryl)lysine; alternate mark. An N6-crotonyllysine; alternate modification is found at Lys-35. Residue Lys-35 is modified to N6-glutaryllysine; alternate. Lys-35 is modified (N6-succinyllysine; alternate). Residue Lys-35 forms a Glycyl lysine isopeptide (Lys-Gly) (interchain with G-Cter in ubiquitin); alternate linkage. Position 36 is a polyADP-ribosyl glutamic acid (Glu-36). Ser-37 carries the post-translational modification Phosphoserine; by AMPK. N6-(2-hydroxyisobutyryl)lysine; alternate is present on residues Lys-44, Lys-47, and Lys-58. Residue Lys-44 is modified to N6-lactoyllysine; alternate. 2 positions are modified to N6-glutaryllysine; alternate: Lys-44 and Lys-47. Lys-47 is modified (N6-methyllysine; alternate). Residue Lys-58 is modified to N6,N6-dimethyllysine; alternate. A Dimethylated arginine modification is found at Arg-80. N6-(2-hydroxyisobutyryl)lysine; alternate is present on Lys-86. Lys-86 carries the post-translational modification N6-(beta-hydroxybutyryl)lysine; alternate. Lys-86 is modified (N6-acetyllysine; alternate). N6-lactoyllysine; alternate is present on Lys-86. Position 86 is an N6,N6,N6-trimethyllysine; alternate (Lys-86). 2 positions are modified to omega-N-methylarginine: Arg-87 and Arg-93. Residue Lys-109 is modified to N6-(2-hydroxyisobutyryl)lysine; alternate. Lys-109 carries the N6-lactoyllysine; alternate modification. Lys-109 bears the N6-glutaryllysine; alternate mark. Position 109 is an N6-methyllysine; alternate (Lys-109). O-linked (GlcNAc) serine glycosylation is present at Ser-113. Phosphothreonine is present on Thr-116. An N6-(2-hydroxyisobutyryl)lysine; alternate mark is found at Lys-117 and Lys-121. 2 positions are modified to N6-(beta-hydroxybutyryl)lysine; alternate: Lys-117 and Lys-121. N6-lactoyllysine; alternate occurs at positions 117 and 121. N6-glutaryllysine; alternate occurs at positions 117 and 121. N6-succinyllysine; alternate occurs at positions 117 and 121. Lys-117 carries the post-translational modification N6-malonyllysine; alternate. Position 117 is an N6-methylated lysine; alternate (Lys-117). Residue Lys-121 forms a Glycyl lysine isopeptide (Lys-Gly) (interchain with G-Cter in ubiquitin); alternate linkage.

This sequence belongs to the histone H2B family. In terms of assembly, the nucleosome is a histone octamer containing two molecules each of H2A, H2B, H3 and H4 assembled in one H3-H4 heterotetramer and two H2A-H2B heterodimers. The octamer wraps approximately 147 bp of DNA. In terms of processing, monoubiquitination at Lys-35 (H2BK34Ub) by the MSL1/MSL2 dimer is required for histone H3 'Lys-4' (H3K4me) and 'Lys-79' (H3K79me) methylation and transcription activation at specific gene loci, such as HOXA9 and MEIS1 loci. Similarly, monoubiquitination at Lys-121 (H2BK120Ub) by the RNF20/40 complex gives a specific tag for epigenetic transcriptional activation and is also prerequisite for histone H3 'Lys-4' and 'Lys-79' methylation. It also functions cooperatively with the FACT dimer to stimulate elongation by RNA polymerase II. H2BK120Ub also acts as a regulator of mRNA splicing: deubiquitination by USP49 is required for efficient cotranscriptional splicing of a large set of exons. Post-translationally, phosphorylation at Ser-37 (H2BS36ph) by AMPK in response to stress promotes transcription. Phosphorylated on Ser-15 (H2BS14ph) by STK4/MST1 during apoptosis; which facilitates apoptotic chromatin condensation. Also phosphorylated on Ser-15 in response to DNA double strand breaks (DSBs), and in correlation with somatic hypermutation and immunoglobulin class-switch recombination. GlcNAcylation at Ser-113 promotes monoubiquitination of Lys-121. It fluctuates in response to extracellular glucose, and associates with transcribed genes. In terms of processing, ADP-ribosylated by PARP1 or PARP2 on Ser-7 (H2BS6ADPr) in response to DNA damage. H2BS6ADPr promotes recruitment of CHD1L. Mono-ADP-ribosylated on Glu-3 (H2BE2ADPr) by PARP3 in response to single-strand breaks. Poly ADP-ribosylation on Glu-36 (H2BE35ADPr) by PARP1 regulates adipogenesis: it inhibits phosphorylation at Ser-37 (H2BS36ph), thereby blocking expression of pro-adipogenetic genes. Post-translationally, crotonylation (Kcr) is specifically present in male germ cells and marks testis-specific genes in post-meiotic cells, including X-linked genes that escape sex chromosome inactivation in haploid cells. Crotonylation marks active promoters and enhancers and confers resistance to transcriptional repressors. It is also associated with post-meiotically activated genes on autosomes. Lactylated in macrophages by EP300/P300 by using lactoyl-CoA directly derived from endogenous or exogenous lactate, leading to stimulates gene transcription.

The protein localises to the nucleus. It is found in the chromosome. Core component of nucleosome. Nucleosomes wrap and compact DNA into chromatin, limiting DNA accessibility to the cellular machineries which require DNA as a template. Histones thereby play a central role in transcription regulation, DNA repair, DNA replication and chromosomal stability. DNA accessibility is regulated via a complex set of post-translational modifications of histones, also called histone code, and nucleosome remodeling. Its function is as follows. Has broad antibacterial activity. May contribute to the formation of the functional antimicrobial barrier of the colonic epithelium, and to the bactericidal activity of amniotic fluid. The polypeptide is Histone H2B type F-S (Homo sapiens (Human)).